The sequence spans 222 residues: Sortase A (222 aa).

Topologically, residues 1-7 (MLKKTIA) are cytoplasmic. Residues 8–28 (IIILIIGLLLIFSPFIKNGIV) form a helical membrane-spanning segment. The Extracellular portion of the chain corresponds to 29-222 (KYMSGHETIE…ELENKYFPSK (194 aa)). H127 acts as the Proton donor/acceptor in catalysis. C188 acts as the Acyl-thioester intermediate in catalysis.

Belongs to the bacterial sortase family. Class A subfamily.

Its subcellular location is the cell membrane. Activity is enhanced by Zn(2+) and strongly enhanced by Ca(2+). Inhibited by chalcone, a precursor of several flavonoids, which blocks the SrtA active site. Transpeptidase that anchors surface proteins to the cell wall. Recognizes and modifies its substrate by proteolytic cleavage of a C-terminal sorting signal. Following cleavage, a covalent intermediate is formed via a thioester bond between the sortase and its substrate, which is then transferred and covalently attached to the cell wall. This sortase recognizes a Leu-Pro-x-Thr-Gly (LPXTG) motif, which is cleaved by the sortase between the threonine and glycine residues. Involved in pathogenesis. May regulate the rate of synthesis and/or the stability of a subset of LPXTG proteins. Not involved in cell wall-anchoring of Hbp2 (SvpA) or Hbp1. This Listeria monocytogenes serovar 1/2a (strain ATCC BAA-679 / EGD-e) protein is Sortase A.